The following is a 729-amino-acid chain: MVNKDDRIRPVHEADGEPLFETRRRTGRVIAYRFFSASVFVCICLIWFYRIGEIGDNRTVLDRLIWFVMFIVEIWFGLYWVVTQSSRWNPVWRFPFSDRLSRRYGSDLPRLDVFVCTADPVIEPPLLVVNTVLSVTALDYPPEKLAVYLSDDGGSELTFYALTEAAEFAKTWVPFCKKFNVEPTSPAAYLSSKANCLDSAAEEVAKLYREMAARIETAARLGRIPEEARVKYGDGFSQWDADATRRNHGTILQVLVDGREGNTIAIPTLVYLSREKRPQHHHNFKAGAMNALLRVSSKITCGKIILNLDCDMYANNSKSTRDALCILLDEKEGKEIAFVQFPQCFDNVTRNDLYGSMMRVGIDVEFLGLDGNGGPLYIGTGCFHRRDVICGRKYGEEEEEEESERIHENLEPEMIKALASCTYEENTQWGKEMGVKYGCPVEDVITGLTIQCRGWKSAYLNPEKQAFLGVAPTNLHQMLVQQRRWSEGDFQIMLSKYSPVWYGKGKISLGLILGYCCYCLWAPSSLPVLIYSVLTSLCLFKGIPLFPKVSSSWFIPFGYVTVAATAYSLAEFLWCGGTFRGWWNEQRMWLYRRTSSFLFGFMDTIKKLLGVSESAFVITAKVAEEEAAERYKEEVMEFGVESPMFLVLGTLGMLNLFCFAAAVARLVSGDGGDLKTMGMQFVITGVLVVINWPLYKGMLLRQDKGKMPMSVTVKSVVLALSACTCLAFL.

A run of 2 helical transmembrane segments spans residues 29–49 (VIAYRFFSASVFVCICLIWFY) and 64–84 (LIWFVMFIVEIWFGLYWVVTQ). Residues aspartate 152 and aspartate 443 contribute to the active site. 5 helical membrane passes run 526 to 546 (LPVLIYSVLTSLCLFKGIPLF), 553 to 573 (WFIPFGYVTVAATAYSLAEFL), 644 to 664 (MFLVLGTLGMLNLFCFAAAVA), 680 to 700 (QFVITGVLVVINWPLYKGMLL), and 709 to 729 (MSVTVKSVVLALSACTCLAFL).

The protein belongs to the glycosyltransferase 2 family. Plant cellulose synthase-like E subfamily.

The protein localises to the golgi apparatus membrane. Thought to be a Golgi-localized beta-glycan synthase that polymerize the backbones of noncellulosic polysaccharides (hemicelluloses) of plant cell wall. This is Cellulose synthase-like protein E1 (CSLE1) from Arabidopsis thaliana (Mouse-ear cress).